Consider the following 337-residue polypeptide: N-acetyl-gamma-glutamyl-phosphate reductase (337 aa).

Cysteine 149 is a catalytic residue.

The protein belongs to the NAGSA dehydrogenase family. Type 1 subfamily.

It localises to the cytoplasm. The catalysed reaction is N-acetyl-L-glutamate 5-semialdehyde + phosphate + NADP(+) = N-acetyl-L-glutamyl 5-phosphate + NADPH + H(+). The protein operates within amino-acid biosynthesis; L-arginine biosynthesis; N(2)-acetyl-L-ornithine from L-glutamate: step 3/4. Its function is as follows. Catalyzes the NADPH-dependent reduction of N-acetyl-5-glutamyl phosphate to yield N-acetyl-L-glutamate 5-semialdehyde. This chain is N-acetyl-gamma-glutamyl-phosphate reductase, found in Wolinella succinogenes (strain ATCC 29543 / DSM 1740 / CCUG 13145 / JCM 31913 / LMG 7466 / NCTC 11488 / FDC 602W) (Vibrio succinogenes).